The following is a 66-amino-acid chain: Putative alpha-neurotoxin RjAa16 (66 aa).

Residues 1–60 (KEGYPVDWGNCKYECMSDAYCKDLCVDRKAKSGYCYKLNWFCYCEGLPDDSPIKTNGHCR) form the LCN-type CS-alpha/beta domain. 4 disulfides stabilise this stretch: cysteine 11–cysteine 59, cysteine 15–cysteine 35, cysteine 21–cysteine 42, and cysteine 25–cysteine 44.

Belongs to the long (4 C-C) scorpion toxin superfamily. Sodium channel inhibitor family. Alpha subfamily. Expressed by the venom gland.

The protein resides in the secreted. Alpha toxins bind voltage-independently at site-3 of sodium channels (Nav) and inhibits the inactivation of the activated channels, thereby blocking neuronal transmission. This Rhopalurus junceus (Caribbean blue scorpion) protein is Putative alpha-neurotoxin RjAa16.